Here is a 351-residue protein sequence, read N- to C-terminus: Amylovoran biosynthesis glycosyltransferase AmsD (351 aa).

This sequence belongs to the glycosyltransferase group 1 family. Glycosyltransferase 4 subfamily.

Its pathway is glycan metabolism; exopolysaccharide biosynthesis. Functionally, involved in the biosynthesis of amylovoran which functions as a virulence factor. May be involved in the formation of galactose alpha-1,6 linkages in amylovoran. The sequence is that of Amylovoran biosynthesis glycosyltransferase AmsD (amsD) from Erwinia amylovora (Fire blight bacteria).